A 145-amino-acid polypeptide reads, in one-letter code: Basic phospholipase A2 PC17 (145 aa).

A signal peptide spans 1 to 21 (MYPAHLLVLLAVCVSLLGASA). Positions 22-27 (ISNQPR) are excised as a propeptide. 7 disulfide bridges follow: Cys-38-Cys-98, Cys-54-Cys-144, Cys-56-Cys-72, Cys-71-Cys-125, Cys-78-Cys-118, Cys-87-Cys-111, and Cys-105-Cys-116. Ca(2+) is bound by residues Tyr-55, Gly-57, and Gly-59. His-75 is a catalytic residue. Asp-76 contributes to the Ca(2+) binding site. Residue Asp-119 is part of the active site.

This sequence belongs to the phospholipase A2 family. Group I subfamily. D49 sub-subfamily. The cofactor is Ca(2+). As to expression, expressed by the venom gland.

The protein resides in the secreted. It carries out the reaction a 1,2-diacyl-sn-glycero-3-phosphocholine + H2O = a 1-acyl-sn-glycero-3-phosphocholine + a fatty acid + H(+). Its function is as follows. Snake venom phospholipase A2 (PLA2) that inhibits neuromuscular transmission by blocking acetylcholine release from the nerve termini. PLA2 catalyzes the calcium-dependent hydrolysis of the 2-acyl groups in 3-sn-phosphoglycerides. The chain is Basic phospholipase A2 PC17 from Laticauda colubrina (Yellow-lipped sea krait).